A 267-amino-acid chain; its full sequence is Glutamate racemase (267 aa).

Substrate is bound by residues 9 to 10 and 41 to 42; these read DS and YS. The active-site Proton donor/acceptor is the C73. 74 to 75 provides a ligand contact to substrate; it reads NT. C184 serves as the catalytic Proton donor/acceptor. 185-186 lines the substrate pocket; sequence TH.

The protein belongs to the aspartate/glutamate racemases family.

The enzyme catalyses L-glutamate = D-glutamate. Its pathway is cell wall biogenesis; peptidoglycan biosynthesis. Provides the (R)-glutamate required for cell wall biosynthesis. The sequence is that of Glutamate racemase from Actinobacillus pleuropneumoniae serotype 7 (strain AP76).